We begin with the raw amino-acid sequence, 282 residues long: B3 domain-containing protein At5g06250 (282 aa).

A DNA-binding region (TF-B3) is located at residues 46-159 (FEKSLTPSDV…RLFIGWRRRG (114 aa)).

The protein localises to the nucleus. The polypeptide is B3 domain-containing protein At5g06250 (Arabidopsis thaliana (Mouse-ear cress)).